The primary structure comprises 263 residues: Aquaglyceroporin (263 aa).

A disordered region spans residues Met-1–Arg-22. 6 helical membrane-spanning segments follow: residues Lys-41–Ala-61, Gly-64–Phe-84, Leu-113–Ile-133, Val-157–Met-177, Leu-180–Met-200, and Val-222–Gly-242.

The protein belongs to the MIP/aquaporin (TC 1.A.8) family. In terms of assembly, multimer.

It localises to the vacuole membrane. The enzyme catalyses H2O(in) = H2O(out). It catalyses the reaction glycerol(in) = glycerol(out). The catalysed reaction is urea(in) = urea(out). Mediates water and glycerol transport across cell membranes. Permeable to selected sugar alcohols of up to five carbons and urea. Permeable to methylamine/methylammonium. This Toxoplasma gondii (strain ATCC 50611 / Me49) protein is Aquaglyceroporin.